The primary structure comprises 392 residues: S-adenosylmethionine synthase (392 aa).

H15 lines the ATP pocket. D17 is a binding site for Mg(2+). E43 contributes to the K(+) binding site. The L-methionine site is built by E56 and Q99. The flexible loop stretch occupies residues 99–109 (QSKDIAQGVDE). Residues 173-175 (DGK), 239-240 (KF), D248, 254-255 (RK), A271, and K275 each bind ATP. D248 is an L-methionine binding site. K279 is an L-methionine binding site.

This sequence belongs to the AdoMet synthase family. Homotetramer; dimer of dimers. It depends on Mg(2+) as a cofactor. K(+) serves as cofactor.

It localises to the cytoplasm. The catalysed reaction is L-methionine + ATP + H2O = S-adenosyl-L-methionine + phosphate + diphosphate. Its pathway is amino-acid biosynthesis; S-adenosyl-L-methionine biosynthesis; S-adenosyl-L-methionine from L-methionine: step 1/1. Catalyzes the formation of S-adenosylmethionine (AdoMet) from methionine and ATP. The overall synthetic reaction is composed of two sequential steps, AdoMet formation and the subsequent tripolyphosphate hydrolysis which occurs prior to release of AdoMet from the enzyme. This chain is S-adenosylmethionine synthase, found in Finegoldia magna (strain ATCC 29328 / DSM 20472 / WAL 2508) (Peptostreptococcus magnus).